A 944-amino-acid polypeptide reads, in one-letter code: Protocadherin gamma-C5 (944 aa).

The first 29 residues, 1–29 (MGPKTLPQLAGKWQVLCMLSLCCWGWVSG), serve as a signal peptide directing secretion. Cadherin domains are found at residues 30–133 (QLRY…SPSF), 134–242 (ATPE…APTF), 243–350 (QSSV…APEV), 351–454 (LLAS…APRF), 455–564 (NQQL…APAV), and 571–677 (WEHS…MPKS). Topologically, residues 30-693 (QLRYSVVEES…PPERSDLTLY (664 aa)) are extracellular. 3 N-linked (GlcNAc...) asparagine glycosylation sites follow: Asn-265, Asn-443, and Asn-547. Residues 694-714 (LIVALATVSLLSLVTFTFLSA) traverse the membrane as a helical segment. Residues 715–944 (KCLQGNADGD…KKKSGKKEKK (230 aa)) are Cytoplasmic-facing. Disordered stretches follow at residues 722 to 747 (DGDG…QSSP), 812 to 853 (SNTL…WPNN), and 914 to 944 (ATLT…KEKK). Over residues 820–853 (QQAPPNTDWRFSQAQRPGTSGSQNGDDTGTWPNN) the composition is skewed to polar residues. Residues 934–944 (NKKKSGKKEKK) show a composition bias toward basic residues.

It is found in the cell membrane. Functionally, potential calcium-dependent cell-adhesion protein. May be involved in the establishment and maintenance of specific neuronal connections in the brain. In Homo sapiens (Human), this protein is Protocadherin gamma-C5 (PCDHGC5).